We begin with the raw amino-acid sequence, 274 residues long: Imidazole glycerol phosphate synthase subunit HisF (274 aa).

Residues D11 and D134 contribute to the active site.

Belongs to the HisA/HisF family. As to quaternary structure, heterodimer of HisH and HisF.

The protein localises to the cytoplasm. The enzyme catalyses 5-[(5-phospho-1-deoxy-D-ribulos-1-ylimino)methylamino]-1-(5-phospho-beta-D-ribosyl)imidazole-4-carboxamide + L-glutamine = D-erythro-1-(imidazol-4-yl)glycerol 3-phosphate + 5-amino-1-(5-phospho-beta-D-ribosyl)imidazole-4-carboxamide + L-glutamate + H(+). Its pathway is amino-acid biosynthesis; L-histidine biosynthesis; L-histidine from 5-phospho-alpha-D-ribose 1-diphosphate: step 5/9. Functionally, IGPS catalyzes the conversion of PRFAR and glutamine to IGP, AICAR and glutamate. The HisF subunit catalyzes the cyclization activity that produces IGP and AICAR from PRFAR using the ammonia provided by the HisH subunit. This Methanosphaera stadtmanae (strain ATCC 43021 / DSM 3091 / JCM 11832 / MCB-3) protein is Imidazole glycerol phosphate synthase subunit HisF.